Consider the following 463-residue polypeptide: Cysteine--tRNA ligase (463 aa).

Zn(2+) is bound at residue C28. Positions 30–40 (ITIYDLCHIGH) match the 'HIGH' region motif. Zn(2+) is bound by residues C209, H234, and E238. Positions 266-270 (KMSKS) match the 'KMSKS' region motif. Position 269 (K269) interacts with ATP.

Belongs to the class-I aminoacyl-tRNA synthetase family. As to quaternary structure, monomer. Zn(2+) is required as a cofactor.

The protein resides in the cytoplasm. The enzyme catalyses tRNA(Cys) + L-cysteine + ATP = L-cysteinyl-tRNA(Cys) + AMP + diphosphate. The protein is Cysteine--tRNA ligase of Proteus mirabilis (strain HI4320).